Reading from the N-terminus, the 429-residue chain is MFVDQVKIYVKAGNGGDGMVAFRREKFVPNGGPAGGDGGKGADVVFVVDEGLRTLVDFRFKRIFKAEHGEHGMSKSMHGRGAEDLVVKVPQGTIVKDIDTGEIIADLVAHGQRAVIAKAGRGGRGNKRFATPANPAPELSENGEPGQERNVQLELKVLADVGLVGFPSVGKSTLLSVVSAARPKIAAYHFTTIVPNLGMVDAGDGRSFVMADLPGLIEGASQGVGLGHQFLRHIERTRVIVHVIDMSGSEGRVPYEDYMAINNELEQYNLRLMERPQIIVANKMDMPDAEENLNEFKTKIAEDIPVFPISAVTKTGLRELLLAIADKLETTPEFPLNEILEQEDEDTVLYKYVADEPDFEISREPDGTFVLSGAKIERLFTMTNFERDASISRFARQLRAMGVDEALRKRGAKDGDIVRLLDYEFEFMD.

An Obg domain is found at 1–158; that stretch reads MFVDQVKIYV…RNVQLELKVL (158 aa). A disordered region spans residues 124–145; it reads RGNKRFATPANPAPELSENGEP. One can recognise an OBG-type G domain in the interval 159-329; it reads ADVGLVGFPS…LLLAIADKLE (171 aa). GTP is bound by residues 165–172, 190–194, 212–215, 282–285, and 310–312; these read GFPSVGKS, FTTIV, DLPG, NKMD, and SAV. 2 residues coordinate Mg(2+): Ser-172 and Thr-192. In terms of domain architecture, OCT spans 351–429; the sequence is KYVADEPDFE…LLDYEFEFMD (79 aa).

The protein belongs to the TRAFAC class OBG-HflX-like GTPase superfamily. OBG GTPase family. In terms of assembly, monomer. Mg(2+) serves as cofactor.

It localises to the cytoplasm. An essential GTPase which binds GTP, GDP and possibly (p)ppGpp with moderate affinity, with high nucleotide exchange rates and a fairly low GTP hydrolysis rate. Plays a role in control of the cell cycle, stress response, ribosome biogenesis and in those bacteria that undergo differentiation, in morphogenesis control. In Listeria monocytogenes serotype 4a (strain HCC23), this protein is GTPase Obg.